A 375-amino-acid polypeptide reads, in one-letter code: Methylthioribose-1-phosphate isomerase (375 aa).

Substrate is bound by residues 53–55 (RGA), Arg90, and Gln202. Asp243 serves as the catalytic Proton donor. 253–254 (NK) contributes to the substrate binding site.

Belongs to the eIF-2B alpha/beta/delta subunits family. MtnA subfamily.

The enzyme catalyses 5-(methylsulfanyl)-alpha-D-ribose 1-phosphate = 5-(methylsulfanyl)-D-ribulose 1-phosphate. Its pathway is amino-acid biosynthesis; L-methionine biosynthesis via salvage pathway; L-methionine from S-methyl-5-thio-alpha-D-ribose 1-phosphate: step 1/6. Functionally, catalyzes the interconversion of methylthioribose-1-phosphate (MTR-1-P) into methylthioribulose-1-phosphate (MTRu-1-P). This Rhodospirillum centenum (strain ATCC 51521 / SW) protein is Methylthioribose-1-phosphate isomerase.